The chain runs to 244 residues: DNA polymerase sliding clamp (244 aa).

This sequence belongs to the PCNA family. Homotrimer. The subunits circularize to form a toroid; DNA passes through its center. Replication factor C (RFC) is required to load the toroid on the DNA.

Functionally, sliding clamp subunit that acts as a moving platform for DNA processing. Responsible for tethering the catalytic subunit of DNA polymerase and other proteins to DNA during high-speed replication. In Methanobrevibacter smithii (strain ATCC 35061 / DSM 861 / OCM 144 / PS), this protein is DNA polymerase sliding clamp.